The chain runs to 136 residues: Non-structural protein 1 (136 aa).

Belongs to the pneumovirus non-structural protein 1 family. As to quaternary structure, monomer. Homomultimer. Heteromultimer with NS2. Interacts with the matrix protein M. Interacts with host ELOC and CUL2; this interaction allows NS1 to form an active E3 ligase with ELOC and CUL2. Interacts with host IRF3; this interaction leads to the disrupted association of IRF3 with CREBBP and thus reduced binding of IRF3 to the IFN-beta promoter. Interacts with host MAVS; this interaction prevents MAVS binding to RIGI and inhibits signaling pathway leading to interferon production. Interacts with host TRIM25 (via SPRY domain); this interaction suppresses RIGI ubiquitination and results in decreased interaction between RIGI and MAVS.

The protein resides in the host cytoplasm. It is found in the host mitochondrion. It localises to the host nucleus. Its function is as follows. Plays a major role in antagonizing the type I IFN-mediated antiviral response by degrading or inhibiting multiple cellular factors required for either IFN induction or response pathways. Acts cooperatively with NS2 to repress activation and nuclear translocation of host IFN-regulatory factor IRF3. Also disrupts the association of IRF3 with CREBBP. Interacts with host mitochondrial-associated membrane (MAM) MAVS and prevents the interaction with RIGI. Interacts with TRIM25 to suppress TRIM25-mediated RIGI ubiquitination and thereby RIGI-MAVS interaction. Together with NS2, participates in the proteasomal degradation of host STAT2, IRF3, IRF7, TBK1 and RIGI through a NS-degradasome involving CUL2 and Elongin-C. The degradasome requires an intact mitochondrial MAVS. Decreases the levels of host TRAF3 and IKBKE/IKK-epsilon. As functions other than disruptions of the type I IFN-mediated antiviral signaling pathways, induces host SOCS1 and SOCS3 expression. Suppresses premature apoptosis by an NF-kappa-B-dependent, interferon-independent mechanism and thus facilitates virus growth. Additionally, NS1 may serve some inhibitory role in viral transcription and RNA replication. Suppresses proliferation and activation of host CD103+ CD8+ cytotoxic T-lymphocytes and Th17 helper T-lymphocytes. This is Non-structural protein 1 (1C) from Ovis aries (Sheep).